Reading from the N-terminus, the 93-residue chain is Regulatory protein RepI (93 aa).

In terms of biological role, this protein is involved in regulating the plasmid copy-number. Increasing the level of this protein results in a higher plasmid copy-number. The chain is Regulatory protein RepI (repI) from Escherichia coli.